Reading from the N-terminus, the 432-residue chain is Hexane cyclase pydB (432 aa).

An N-terminal signal peptide occupies residues 1-20; the sequence is MMHQSLGLGLVVFVAAPVVA. 4 N-linked (GlcNAc...) asparagine glycosylation sites follow: Asn59, Asn78, Asn153, and Asn308.

The protein belongs to the Diels-Alderase family.

It participates in mycotoxin biosynthesis. Functionally, hexane cyclase; part of the gene cluster that mediates the biosynthesis of pyrrocidines, fungal natural products containing a macrocyclic para-cyclophane connected to a decahydrofluorene ring system that show potent antibiotic activities toward Gram-negative bacteria. Within the pathway, pydB functions synergistically with pydE, pydX and pydZ to form the cyclophane. The pathway begins with the PKS-NRPS pydA which, with the help of the trans-enoyl reductase pydC, synthesizes the polyketide-tyrosyl acyl thioester product which can be reductively off-loaded by the terminal reductase (R) domain in pydA. The alpha/beta hydrolase pydG is then required to catalyze the subsequent Knoevenagel condensation that affords the 3-pyrrolin-2-one ring, whereas the four proteins pydB, pydE, pydX and pydZ then function synergistically to form the cyclophane. PydB and the membrane-bound pydX and pydZ are lipid-binding proteins that can sequester and mold the pdyG product into the inverse S-shape. Binding of the medium chain reductase pydE to the complex would trigger the cascade oxidative cyclization. PydY is involved the Diels-Alder cycloaddition that forms the decahydrofluorene core. Additional non-enzymatic hydroxylation yields pyrrocidine A2 which can be further reduced into pyrrocidine B by an endogenous reductase. The protein is Hexane cyclase pydB of Acremonium sp.